A 100-amino-acid polypeptide reads, in one-letter code: UPF0213 protein YhbQ (100 aa).

A GIY-YIG domain is found at 2-77 (TPWFLYLIRT…KQLTKRQKER (76 aa)).

This sequence belongs to the UPF0213 family.

The polypeptide is UPF0213 protein YhbQ (Escherichia coli O139:H28 (strain E24377A / ETEC)).